Reading from the N-terminus, the 896-residue chain is Sodium/hydrogen exchanger 5 (896 aa).

The Cytoplasmic segment spans residues 1 to 45 (MLRAALSLLALPLAGAAEEPTQKPESPGEPPPGLELFRWQWHEVE). The chain crosses the membrane as a helical span at residues 46-66 (APYLVALWILVASLAKIVFHL). Residues 67-73 (SRKVTSL) are Extracellular-facing. The chain crosses the membrane as a helical span at residues 74 to 94 (VPESCLLILLGLVLGGIVLAV). The Cytoplasmic portion of the chain corresponds to 95–103 (AKKAEYQLE). The helical transmembrane segment at 104–124 (PGTFFLFLLPPIVLDSGYFMP) threads the bilayer. Residues 125–134 (SRLFFDNLGA) lie on the Extracellular side of the membrane. The chain crosses the membrane as a helical span at residues 135-155 (ILTYAVVGTLWNAFTTGAALW). The Cytoplasmic portion of the chain corresponds to 156–173 (GLQQAGLVAPRVQAGLLD). Residues 174–194 (FLLFGSLISAVDPVAVLAVFE) traverse the membrane as a helical segment. Residues 195-200 (EVHVNE) are Extracellular-facing. The N-linked (GlcNAc...) asparagine glycan is linked to Asn199. A helical transmembrane segment spans residues 201-221 (TLFIIVFGESLLNDAVTVVLY). At 222-246 (KVCNSFVEMGSANVQATDYLKGVAS) the chain is on the cytoplasmic side. The chain crosses the membrane as a helical span at residues 247-267 (LFVVSLGGAAVGLVFAFLLAL). Residues 268–276 (TTRFTKRVR) lie on the Extracellular side of the membrane. The helical transmembrane segment at 277–297 (IIEPLLVFLLAYAAYLTAEMA) threads the bilayer. Topologically, residues 298-331 (SLSAILAVTMCGLGCKKYVEANISHKSRTTVKYT) are cytoplasmic. Residues 332–352 (MKTLASCAETVIFMLLGISAV) form a helical membrane-spanning segment. Residues 353–360 (DSSKWAWD) lie on the Extracellular side of the membrane. Residues 361–381 (SGLVLGTLIFILFFRALGVVL) traverse the membrane as a helical segment. The Cytoplasmic portion of the chain corresponds to 382–398 (QTWVLNQFRLVPLDKID). Residues 399–419 (QVVMSYGGLRGAVAFALVILL) traverse the membrane as a helical segment. The Extracellular portion of the chain corresponds to 420–428 (DRTKVPAKD). A helical transmembrane segment spans residues 429 to 449 (YFVATTIVVVFFTVIVQGLTI). The Cytoplasmic segment spans residues 450–896 (KPLVKWLKVK…CIQFNRGSRL (447 aa)). The required for interaction with ARRB2 stretch occupies residues 576–721 (GSGACLDLQV…SETEKEDDEG (146 aa)). Disordered stretches follow at residues 658-686 (TKSK…GKHR), 701-720 (ESEE…EDDE), and 818-864 (HPRG…QQQE). Residues 660-672 (SKPRPRKTGRRKK) are compositionally biased toward basic residues. A compositionally biased stretch (polar residues) spans 854–864 (ESSADLPQQQE).

It belongs to the monovalent cation:proton antiporter 1 (CPA1) transporter (TC 2.A.36) family. As to quaternary structure, interacts with CHP1 and CHP2. Interacts with ARRB2; facilitates the endocytosis of SLC9A5 from the plasma membrane. Interacts with RACK1; this interaction positively regulates SLC9A5 activity and promotes SLC9A5 localization to focal adhesions. Interacts with SCAMP2; this interaction regulates SLC9A5 cell-surface targeting and SLC9A5 activity. Post-translationally, phosphorylated by PRKAA2; promotes its accumulation at the cell surface. Phosphorylated by CSNK2A1 in a manner favoring its beta-arrestin binding and endocytosis. In terms of tissue distribution, mainly expressed in brain. Expressed in neurons of the central and peripheral nervous system. Expressed also in testis, spleen, and skeletal muscle.

Its subcellular location is the cell membrane. The protein localises to the recycling endosome membrane. It localises to the cell projection. It is found in the dendritic spine membrane. The protein resides in the synaptic cell membrane. Its subcellular location is the cell junction. The protein localises to the focal adhesion. It carries out the reaction Na(+)(in) + H(+)(out) = Na(+)(out) + H(+)(in). Its activity is regulated as follows. ATP-depletion almost completely abolishes SLC9A5 activity. Inhibited by amiloride compounds. Plasma membrane Na(+)/H(+) antiporter. Mediates the electroneutral exchange of intracellular H(+) ions for extracellular Na(+) in 1:1 stoichiometry, thus regulating intracellular pH homeostasis, in particular in neural tissues. Acts as a negative regulator of dendritic spine growth. Plays a role in postsynaptic remodeling and signaling. Can also contribute to organellar pH regulation, with consequences for receptor tyrosine kinase trafficking. The protein is Sodium/hydrogen exchanger 5 of Homo sapiens (Human).